The primary structure comprises 144 residues: L-fucose mutarotase (144 aa).

The active-site Proton donor is histidine 22. Residues aspartate 30, arginine 109, and 131–133 (YGN) contribute to the substrate site.

The protein belongs to the RbsD / FucU family. FucU mutarotase subfamily. In terms of assembly, homodecamer.

The protein localises to the cytoplasm. It catalyses the reaction alpha-L-fucose = beta-L-fucose. Its pathway is carbohydrate metabolism; L-fucose metabolism. In terms of biological role, involved in the anomeric conversion of L-fucose. This is L-fucose mutarotase from Haemophilus influenzae (strain PittEE).